The chain runs to 1025 residues: Multidrug resistance protein MdtC (1025 aa).

12 helical membrane-spanning segments follow: residues 3-23 (FFAL…AITL), 333-353 (EVEQ…FLFL), 360-380 (IIPA…MYLC), 387-407 (LSLM…IVVL), 431-451 (VGFT…PLLL), 463-483 (FAVT…TLTP), 528-548 (LVGV…ISIP), 853-873 (VILI…LYES), 875-895 (VHPL…LLAL), 897-917 (LFNA…IGIV), 953-973 (PIMM…LSGG), and 984-1004 (ITIV…TPVV).

Belongs to the resistance-nodulation-cell division (RND) (TC 2.A.6) family. MdtC subfamily. As to quaternary structure, part of a tripartite efflux system composed of MdtA, MdtB and MdtC. MdtC forms a heteromultimer with MdtB.

Its subcellular location is the cell inner membrane. In Shigella boydii serotype 4 (strain Sb227), this protein is Multidrug resistance protein MdtC.